The primary structure comprises 388 residues: Lipid-A-disaccharide synthase (388 aa).

The protein belongs to the LpxB family.

It carries out the reaction a lipid X + a UDP-2-N,3-O-bis[(3R)-3-hydroxyacyl]-alpha-D-glucosamine = a lipid A disaccharide + UDP + H(+). The protein operates within bacterial outer membrane biogenesis; LPS lipid A biosynthesis. Condensation of UDP-2,3-diacylglucosamine and 2,3-diacylglucosamine-1-phosphate to form lipid A disaccharide, a precursor of lipid A, a phosphorylated glycolipid that anchors the lipopolysaccharide to the outer membrane of the cell. The polypeptide is Lipid-A-disaccharide synthase (Burkholderia thailandensis (strain ATCC 700388 / DSM 13276 / CCUG 48851 / CIP 106301 / E264)).